A 64-amino-acid chain; its full sequence is DNA-binding protein 7 (64 aa).

An N6-methyllysine mark is found at lysine 5 and lysine 7.

This sequence belongs to the 7 kDa DNA-binding/endoribonuclease P2 family. Monomer.

The protein resides in the cytoplasm. Functionally, can constrain negative DNA supercoils. May be involved in maintaining the integrity of the genome at high temperature. This chain is DNA-binding protein 7, found in Sulfurisphaera tokodaii (strain DSM 16993 / JCM 10545 / NBRC 100140 / 7) (Sulfolobus tokodaii).